Here is a 122-residue protein sequence, read N- to C-terminus: Small ribosomal subunit protein uS13 (122 aa).

The tract at residues 99-122 (RGQRTHTNARTRKGPAKAIAGKKK) is disordered.

This sequence belongs to the universal ribosomal protein uS13 family. In terms of assembly, part of the 30S ribosomal subunit. Forms a loose heterodimer with protein S19. Forms two bridges to the 50S subunit in the 70S ribosome.

Functionally, located at the top of the head of the 30S subunit, it contacts several helices of the 16S rRNA. In the 70S ribosome it contacts the 23S rRNA (bridge B1a) and protein L5 of the 50S subunit (bridge B1b), connecting the 2 subunits; these bridges are implicated in subunit movement. Contacts the tRNAs in the A and P-sites. This chain is Small ribosomal subunit protein uS13, found in Agrobacterium fabrum (strain C58 / ATCC 33970) (Agrobacterium tumefaciens (strain C58)).